A 341-amino-acid chain; its full sequence is Cytoplasmic tRNA 2-thiolation protein 1 (341 aa).

This sequence belongs to the TtcA family. CTU1/NCS6/ATPBD3 subfamily.

The protein resides in the cytoplasm. It functions in the pathway tRNA modification; 5-methoxycarbonylmethyl-2-thiouridine-tRNA biosynthesis. Functionally, plays a central role in 2-thiolation of mcm(5)S(2)U at tRNA wobble positions of tRNA(Lys), tRNA(Glu) and tRNA(Gln). Directly binds tRNAs and probably acts by catalyzing adenylation of tRNAs, an intermediate required for 2-thiolation. It is unclear whether it acts as a sulfurtransferase that transfers sulfur from thiocarboxylated URM1 onto the uridine of tRNAs at wobble position. This chain is Cytoplasmic tRNA 2-thiolation protein 1, found in Aedes aegypti (Yellowfever mosquito).